A 320-amino-acid chain; its full sequence is Beta-ketoacyl-[acyl-carrier-protein] synthase III (320 aa).

Residues Cys112 and His245 contribute to the active site. An ACP-binding region spans residues 246-250 (QANIR). Asn275 is an active-site residue.

Belongs to the thiolase-like superfamily. FabH family. Homodimer.

Its subcellular location is the cytoplasm. The catalysed reaction is malonyl-[ACP] + acetyl-CoA + H(+) = 3-oxobutanoyl-[ACP] + CO2 + CoA. It participates in lipid metabolism; fatty acid biosynthesis. Its function is as follows. Catalyzes the condensation reaction of fatty acid synthesis by the addition to an acyl acceptor of two carbons from malonyl-ACP. Catalyzes the first condensation reaction which initiates fatty acid synthesis and may therefore play a role in governing the total rate of fatty acid production. Possesses both acetoacetyl-ACP synthase and acetyl transacylase activities. Its substrate specificity determines the biosynthesis of branched-chain and/or straight-chain of fatty acids. The protein is Beta-ketoacyl-[acyl-carrier-protein] synthase III of Streptococcus thermophilus (strain ATCC BAA-250 / LMG 18311).